A 151-amino-acid polypeptide reads, in one-letter code: MKTKAAVRNMRLEDIDHVYEIEASSFTSPWTKDSFYHELLENPYAHYLVIEKDGHLAGYCGIWIVMDDAQITNIAIKPEYRGQSLGETLFRSAVELCKEKDARRLSLEVRVSNHPAQGLYKKFGMQPGGIRKNYYTDNGEDALIMWVTINE.

The region spanning 5–150 (AAVRNMRLED…DALIMWVTIN (146 aa)) is the N-acetyltransferase domain. 74-76 (IAI) lines the acetyl-CoA pocket. The Proton acceptor role is filled by E108. N113 lines the acetyl-CoA pocket. The active-site Proton donor is Y120.

Belongs to the acetyltransferase family. RimI subfamily.

The protein localises to the cytoplasm. It carries out the reaction N-terminal L-alanyl-[ribosomal protein bS18] + acetyl-CoA = N-terminal N(alpha)-acetyl-L-alanyl-[ribosomal protein bS18] + CoA + H(+). Its function is as follows. Acetylates the N-terminal alanine of ribosomal protein bS18. The protein is Putative [ribosomal protein bS18]-alanine N-acetyltransferase (rimI) of Bacillus subtilis (strain 168).